We begin with the raw amino-acid sequence, 223 residues long: UPF0441 protein YgiB (223 aa).

Positions 178–195 (TVPKTAMAPKPATTTTVT) are enriched in low complexity. Residues 178–223 (TVPKTAMAPKPATTTTVTRGGFGESVAKQSTLQRSATGTSSRSMGG) form a disordered region. Residues 204–223 (AKQSTLQRSATGTSSRSMGG) are compositionally biased toward polar residues.

This sequence belongs to the UPF0441 family.

This is UPF0441 protein YgiB from Escherichia coli (strain ATCC 8739 / DSM 1576 / NBRC 3972 / NCIMB 8545 / WDCM 00012 / Crooks).